We begin with the raw amino-acid sequence, 811 residues long: G-type lectin S-receptor-like serine/threonine-protein kinase LECRK2 (811 aa).

An N-terminal signal peptide occupies residues 1–23 (MAPILFLPILQILLIYCTKSAQA). One can recognise a Bulb-type lectin domain in the interval 24–153 (QLNISIGSSL…DGATKWESFG (130 aa)). Residues 24–464 (QLNISIGSSL…DKKYWILGSS (441 aa)) are Extracellular-facing. N-linked (GlcNAc...) asparagine glycans are attached at residues Asn26, Asn39, Asn59, Asn219, Asn226, Asn237, and Asn242. The EGF-like; atypical domain maps to 292–344 (PENICQTIQTKVGSGACGFNSYCTFDGTKNTTNCLCPQRYKFFDNERTYKGCR). Intrachain disulfides connect Cys296-Cys314, Cys308-Cys325, Cys327-Cys343, Cys389-Cys411, and Cys393-Cys399. N-linked (GlcNAc...) asparagine glycosylation occurs at Asn321. Residues 352–436 (CDLDETAAMV…LQATVLLKVP (85 aa)) form the PAN domain. Residues 465–485 (LFFGSSVLVNFLLIFVLLFGT) form a helical membrane-spanning segment. At 486–811 (YCSITSRKKT…DPSSYISSLA (326 aa)) the chain is on the cytoplasmic side. Positions 521–795 (GGFHEVLGTG…KVMQMLDGAV (275 aa)) constitute a Protein kinase domain. ATP is bound by residues 527–535 (LGTGASGIV) and Lys551. Catalysis depends on Asp645, which acts as the Proton acceptor.

The protein belongs to the protein kinase superfamily. Ser/Thr protein kinase family.

The protein resides in the membrane. The catalysed reaction is L-seryl-[protein] + ATP = O-phospho-L-seryl-[protein] + ADP + H(+). It catalyses the reaction L-threonyl-[protein] + ATP = O-phospho-L-threonyl-[protein] + ADP + H(+). Involved in resistance against the herbivorous insect brown planthopper (N.lugens, BPH). Member of the BPH3 (BPH resistance locus 3) cluster which contains LECRK1, LECRK2 and LECRK3. This Oryza sativa subsp. indica (Rice) protein is G-type lectin S-receptor-like serine/threonine-protein kinase LECRK2.